A 35-amino-acid polypeptide reads, in one-letter code: Unknown protein 14 from 2D-PAGE (35 aa).

A disordered region spans residues 1-35 (VVXXQTLXDXRGIYGDQGSIGPXXIXGLQGDRDAD).

The protein is Unknown protein 14 from 2D-PAGE of Bombyx mori (Silk moth).